The primary structure comprises 398 residues: uncharacterized protein (398 aa).

Helical transmembrane passes span 37 to 57, 92 to 112, 122 to 142, 186 to 206, 228 to 248, and 268 to 288; these read LVIL…FVQF, IFNA…FIFG, LLTL…SYIP, LFYG…ILII, IGGI…VIGT, and FGVA…NIVL.

The protein localises to the cell membrane. This is an uncharacterized protein from Mycoplasma genitalium (strain ATCC 33530 / DSM 19775 / NCTC 10195 / G37) (Mycoplasmoides genitalium).